Reading from the N-terminus, the 90-residue chain is N(2)-fixation sustaining protein CowN (90 aa).

It belongs to the CowN family.

Functionally, is required to sustain N(2)-dependent growth in the presence of low levels of carbon monoxide (CO). Probably acts by protecting the N(2) fixation ability of the nitrogenase complex, which is inactivated in the presence of CO. The polypeptide is N(2)-fixation sustaining protein CowN (Halorhodospira halophila (strain DSM 244 / SL1) (Ectothiorhodospira halophila (strain DSM 244 / SL1))).